The primary structure comprises 1228 residues: Reverse gyrase (1228 aa).

Residues 1–41 form an RG N-terminal-type zinc finger; that stretch reads MEVPLVAYLHSCPNCGGPITSDRLASGLPCRECLPDGAKAG. Zn(2+)-binding residues include C12, C15, C30, and C33. ATP contacts are provided by residues Q88 and 105–112; that span reads APTGSGKT. A Helicase ATP-binding domain is found at 92 to 255; it reads ARRFVRGKSF…NLTKQLRKAE (164 aa). Residues 211–214 carry the DEAD box motif; sequence DDVD. Residues 631–1228 form a topoisomerase I region; that stretch reads DLMRTILMVV…RKEVLPHLAS (598 aa). Residues 635 to 809 enclose the Toprim domain; sequence TILMVVESPT…DIRRVEFHEV (175 aa). Mg(2+) contacts are provided by E641 and D778. Residues 825–1223 enclose the Topo IA-type catalytic domain; sequence NFSLVKAQIV…LYDEFRKEVL (399 aa). Y967 acts as the O-(5'-phospho-DNA)-tyrosine intermediate in catalysis.

The protein in the N-terminal section; belongs to the DEAD box helicase family. DDVD subfamily. It in the C-terminal section; belongs to the type IA topoisomerase family. As to quaternary structure, monomer. Zn(2+) serves as cofactor. Mg(2+) is required as a cofactor.

The protein localises to the cytoplasm. It carries out the reaction ATP + H2O = ADP + phosphate + H(+). Functionally, modifies the topological state of DNA by introducing positive supercoils in an ATP-dependent process, increasing the linking number in steps of +1. Binds to single-stranded DNA, transiently cleaves and then rejoins the ends, introducing a positive supercoil in the process. The scissile phosphodiester is attacked by the catalytic tyrosine of the enzyme, resulting in the formation of a DNA-(5'-phosphotyrosyl)-enzyme intermediate. Probably involved in rewinding DNA strands in regions of the chromosome that have opened up to allow replication, transcription, DNA repair and/or for DNA protection. This Pyrobaculum aerophilum (strain ATCC 51768 / DSM 7523 / JCM 9630 / CIP 104966 / NBRC 100827 / IM2) protein is Reverse gyrase.